A 463-amino-acid polypeptide reads, in one-letter code: D(5)-like dopamine receptor (463 aa).

At 1-39 the chain is on the extracellular side; the sequence is MENFYNETEPTEPRGGVDPLRVVTAAEDVPAPVGGVSVR. N6 carries an N-linked (GlcNAc...) asparagine glycan. The chain crosses the membrane as a helical span at residues 40 to 65; sequence ALTGCVLCALIVSTLLGNTLVCAAVI. Over 66–76 the chain is Cytoplasmic; sequence KFRHLRSKVTN. The helical transmembrane segment at 77–103 threads the bilayer; the sequence is AFVVSLAVSDLFVAVLVMPWRAVSEVA. The Extracellular segment spans residues 104-112; it reads GVWLFGRFC. An intrachain disulfide couples C112 to C194. A helical transmembrane segment spans residues 113–135; the sequence is DTWVAFDIMCSTASILNLCVISM. The Cytoplasmic segment spans residues 136-154; that stretch reads DRYWAISNPFRYERRMTRR. Residues 155-180 traverse the membrane as a helical segment; that stretch reads FAFLMIAVAWTLSVLISFIPVQLNWH. The Extracellular segment spans residues 181–198; that stretch reads RADNNSSAHEQGDCNASL. Residues 199-223 traverse the membrane as a helical segment; the sequence is NRTYAISSSLISFYIPVLIMVGTYT. The Cytoplasmic portion of the chain corresponds to 224-273; it reads RIFRIAQTQIRRISSLERAAGQRAQNQSHRASTHDESALKTSFKRETKVL. Residues 274-301 traverse the membrane as a helical segment; that stretch reads KTLSVIMGVFVFCWLPFFVLNCVVPFCD. Residues 302-315 are Extracellular-facing; that stretch reads VDKVGEPPCVSDTT. Residues 316 to 337 form a helical membrane-spanning segment; sequence FNIFVWFGWANSSLNPVIYAFN. The Cytoplasmic segment spans residues 338–463; that stretch reads ADFRKAFTTI…PGQIQDLGDL (126 aa).

Belongs to the G-protein coupled receptor 1 family.

The protein resides in the cell membrane. Receptor for dopamine. This Takifugu rubripes (Japanese pufferfish) protein is D(5)-like dopamine receptor (dl).